The primary structure comprises 685 residues: DNA-directed RNA polymerase subunit beta' (685 aa).

Residues C69, C71, C87, and C90 each coordinate Zn(2+). 3 residues coordinate Mg(2+): D492, D494, and D496.

Belongs to the RNA polymerase beta' chain family. RpoC1 subfamily. In terms of assembly, in plastids the minimal PEP RNA polymerase catalytic core is composed of four subunits: alpha, beta, beta', and beta''. When a (nuclear-encoded) sigma factor is associated with the core the holoenzyme is formed, which can initiate transcription. The cofactor is Mg(2+). Requires Zn(2+) as cofactor.

The protein localises to the plastid. The protein resides in the chloroplast. It carries out the reaction RNA(n) + a ribonucleoside 5'-triphosphate = RNA(n+1) + diphosphate. In terms of biological role, DNA-dependent RNA polymerase catalyzes the transcription of DNA into RNA using the four ribonucleoside triphosphates as substrates. In Dioscorea elephantipes (Elephant's foot yam), this protein is DNA-directed RNA polymerase subunit beta'.